A 125-amino-acid polypeptide reads, in one-letter code: UPF0538 protein C2C4.04c (125 aa).

This sequence belongs to the UPF0538 family.

The polypeptide is UPF0538 protein C2C4.04c (Schizosaccharomyces pombe (strain 972 / ATCC 24843) (Fission yeast)).